The sequence spans 637 residues: tRNA-dihydrouridine(47) synthase [NAD(P)(+)]-like (637 aa).

Disordered regions lie at residues 1–21 (MAET…ACER), 41–63 (LDGD…EPGA), and 85–105 (ERQV…VKPA). Residues 89–104 (PKRARGQNKSRPHVKP) are compositionally biased toward basic residues. C3H1-type zinc fingers lie at residues 107–137 (YDKD…HDVG) and 145–175 (ADLG…HLGP). The residue at position 260 (threonine 260) is a Phosphothreonine. A phosphoserine mark is found at serine 263 and serine 264. Residues 298–300 (PLT) and glutamine 352 each bind FMN. Cysteine 383 acts as the Proton donor in catalysis. A Glycyl lysine isopeptide (Lys-Gly) (interchain with G-Cter in SUMO2) cross-link involves residue lysine 403. FMN-binding positions include lysine 422, histidine 452, 484–486 (NGD), and 507–508 (AR).

Belongs to the Dus family. Dus3 subfamily. It depends on FMN as a cofactor.

It carries out the reaction 5,6-dihydrouridine(47) in tRNA + NAD(+) = uridine(47) in tRNA + NADH + H(+). The enzyme catalyses 5,6-dihydrouridine(47) in tRNA + NADP(+) = uridine(47) in tRNA + NADPH + H(+). It catalyses the reaction a 5,6-dihydrouridine in mRNA + NAD(+) = a uridine in mRNA + NADH + H(+). The catalysed reaction is a 5,6-dihydrouridine in mRNA + NADP(+) = a uridine in mRNA + NADPH + H(+). Its function is as follows. Catalyzes the synthesis of dihydrouridine, a modified base, in various RNAs, such as tRNAs, mRNAs and some long non-coding RNAs (lncRNAs). Mainly modifies the uridine in position 47 (U47) in the D-loop of most cytoplasmic tRNAs. Also able to mediate the formation of dihydrouridine in some mRNAs, thereby regulating their translation. This Mus musculus (Mouse) protein is tRNA-dihydrouridine(47) synthase [NAD(P)(+)]-like.